The following is a 552-amino-acid chain: Phosphoglucomutase (552 aa).

The active-site Phosphoserine intermediate is serine 135. Positions 135, 289, 291, and 293 each coordinate Mg(2+).

The protein belongs to the phosphohexose mutase family. Mg(2+) serves as cofactor.

It catalyses the reaction alpha-D-glucose 1-phosphate = alpha-D-glucose 6-phosphate. It participates in glycolipid metabolism; diglucosyl-diacylglycerol biosynthesis. Its function is as follows. Catalyzes the interconversion between glucose-6-phosphate and alpha-glucose-1-phosphate. This is the first step in the biosynthesis of diglucosyl-diacylglycerol (Glc2-DAG), i.e. a glycolipid found in the membrane, which is also used as a membrane anchor for lipoteichoic acid (LTA). This Staphylococcus saprophyticus subsp. saprophyticus (strain ATCC 15305 / DSM 20229 / NCIMB 8711 / NCTC 7292 / S-41) protein is Phosphoglucomutase (pgcA).